Consider the following 246-residue polypeptide: RNA polymerase sigma-B factor (246 aa).

Positions 25-38 match the Polymerase core binding motif; that stretch reads DLIQEGNIGLMKAV. Positions 201–220 form a DNA-binding region, H-T-H motif; the sequence is LKELGEHFGFSRERARQLEI.

This sequence belongs to the sigma-70 factor family.

Sigma factors are initiation factors that promote the attachment of RNA polymerase to specific initiation sites and are then released. This sigma factor is essential for late-stage differentiation of M.xanthus. This is RNA polymerase sigma-B factor (sigB) from Myxococcus xanthus.